Reading from the N-terminus, the 421-residue chain is MVTIVLGAQFGDEGKGKITDLLSQCATLCCRAAGGHNAGHTIVHDDITYDFHILPSGLISPDCINLVGTGTVVHVPSFFKELDALKAKGLKEADKRIFISDRAQVCFDLHSVVDGLEEAILAGKKVGTTGKGIGPCYSDKASRRGVRIGEVLEEGVVESKLRALEAGYRRQFGELKYDLEDEVKRFNEYRTKLQPYVVDQMAFMHKHRSSPSVLVEGANALLLDIDHGTYPYVTSSCTGLGGAIQGLTLNPTSIKSIVGVVKAYSTRVGSGPFPTEQNNAVGEKLQKAGREFGVTTGRRRRCGWLDMVMCRYSNAINHYTVINLTKLDILDDFDEIKVAVAYKLDGKLLESFPAQADVLDKVEVEYVTFPGWKSNTMGATKWEHLPTNAQRYVEFIEREMGGVPIRWIGTGPARNHMIERI.

Residues 11-17 and 39-41 contribute to the GTP site; these read GDEGKGK and GHT. The Proton acceptor role is filled by D12. Mg(2+) is bound by residues D12 and G39. IMP contacts are provided by residues 12-15, 37-40, T129, R143, N219, T234, and R298; these read DEGK and NAGH. The active-site Proton donor is the H40. 294 to 300 provides a ligand contact to substrate; the sequence is VTTGRRR. Residues R300, 326 to 328, and 409 to 411 contribute to the GTP site; these read KLD and GTG.

This sequence belongs to the adenylosuccinate synthetase family. Homodimer. Requires Mg(2+) as cofactor.

The protein localises to the cytoplasm. It carries out the reaction IMP + L-aspartate + GTP = N(6)-(1,2-dicarboxyethyl)-AMP + GDP + phosphate + 2 H(+). It functions in the pathway purine metabolism; AMP biosynthesis via de novo pathway; AMP from IMP: step 1/2. In terms of biological role, plays an important role in the de novo pathway and in the salvage pathway of purine nucleotide biosynthesis. Catalyzes the first committed step in the biosynthesis of AMP from IMP. The chain is Adenylosuccinate synthetase from Paracoccidioides lutzii (strain ATCC MYA-826 / Pb01) (Paracoccidioides brasiliensis).